A 194-amino-acid chain; its full sequence is CASP-like protein 1D1 (194 aa).

Positions 1–16 (MGSDETKSTLDTERST) are enriched in basic and acidic residues. Positions 1–23 (MGSDETKSTLDTERSTVPRTGTT) are disordered. The Cytoplasmic portion of the chain corresponds to 1–31 (MGSDETKSTLDTERSTVPRTGTTTKSCSITQ). A helical membrane pass occupies residues 32-52 (VVLRFVLFAATLTSIVVMVTS). Residues 53-77 (KQTKNIFIPGTPIRIPAAKFTNSPA) are Extracellular-facing. Residues 78–98 (LIYFVVALSVACFYSIVSTFV) traverse the membrane as a helical segment. Topologically, residues 99 to 109 (TVSAFKKHSCS) are cytoplasmic. Residues 110–130 (AILLLNLAIMDAVMVGIVASA) form a helical membrane-spanning segment. The Extracellular portion of the chain corresponds to 131–163 (TGAGGGVAYLGLKGNKEVRWGKICNIYDKFCRH). A helical membrane pass occupies residues 164 to 184 (VGGAIAVSLFASVILLLLSII). The Cytoplasmic segment spans residues 185 to 194 (SVLSLYKKIR).

Belongs to the Casparian strip membrane proteins (CASP) family. Homodimer and heterodimers.

The protein localises to the cell membrane. The polypeptide is CASP-like protein 1D1 (Arabidopsis lyrata subsp. lyrata (Lyre-leaved rock-cress)).